The chain runs to 173 residues: 2-C-methyl-D-erythritol 2,4-cyclodiphosphate synthase (173 aa).

A divalent metal cation-binding residues include aspartate 17 and histidine 19. Residues 17–19 and 49–50 each bind 4-CDP-2-C-methyl-D-erythritol 2-phosphate; these read DVH and HS. An a divalent metal cation-binding site is contributed by histidine 57. 4-CDP-2-C-methyl-D-erythritol 2-phosphate contacts are provided by residues 76–80, 147–150, phenylalanine 154, and arginine 157; these read FPNTD and TTTE.

This sequence belongs to the IspF family. In terms of assembly, homotrimer. A divalent metal cation serves as cofactor.

It catalyses the reaction 4-CDP-2-C-methyl-D-erythritol 2-phosphate = 2-C-methyl-D-erythritol 2,4-cyclic diphosphate + CMP. It functions in the pathway isoprenoid biosynthesis; isopentenyl diphosphate biosynthesis via DXP pathway; isopentenyl diphosphate from 1-deoxy-D-xylulose 5-phosphate: step 4/6. In terms of biological role, involved in the biosynthesis of isopentenyl diphosphate (IPP) and dimethylallyl diphosphate (DMAPP), two major building blocks of isoprenoid compounds. Catalyzes the conversion of 4-diphosphocytidyl-2-C-methyl-D-erythritol 2-phosphate (CDP-ME2P) to 2-C-methyl-D-erythritol 2,4-cyclodiphosphate (ME-CPP) with a corresponding release of cytidine 5-monophosphate (CMP). The chain is 2-C-methyl-D-erythritol 2,4-cyclodiphosphate synthase from Ehrlichia chaffeensis (strain ATCC CRL-10679 / Arkansas).